A 506-amino-acid polypeptide reads, in one-letter code: Maturase K (506 aa).

It belongs to the intron maturase 2 family. MatK subfamily.

It localises to the plastid. The protein localises to the chloroplast. Its function is as follows. Usually encoded in the trnK tRNA gene intron. Probably assists in splicing its own and other chloroplast group II introns. The polypeptide is Maturase K (Trifolium hirtum (Rose clover)).